We begin with the raw amino-acid sequence, 567 residues long: Dihydrolipoyl dehydrogenase 2, chloroplastic (567 aa).

The N-terminal 67 residues, 1 to 67 (MQSVLSLSFS…HIQSRRIEVS (67 aa)), are a transit peptide targeting the chloroplast. Residues 114 to 122 (EGDVVGGTC), Lys131, Gly197, and 221 to 223 (TGS) contribute to the FAD site. Cys122 and Cys127 form a disulfide bridge. NAD(+)-binding positions include 258-265 (GSGYIGLE), Glu281, and Gly354. FAD is bound by residues Asp400 and 406–409 (MLAH). Residue His536 is the Proton acceptor of the active site.

It belongs to the class-I pyridine nucleotide-disulfide oxidoreductase family. Homodimer. Part of the plastidial pyruvate dehydrogenase complex (PDC) containing multiple copies of three enzymatic components: pyruvate dehydrogenase (E1), dihydrolipoamide acetyltransferase (E2) and lipoamide dehydrogenase (E3). It depends on FAD as a cofactor. As to expression, expressed mainly in flower buds and immature siliques, and to a lesser extent in flowers.

The protein resides in the plastid. Its subcellular location is the chloroplast stroma. The catalysed reaction is N(6)-[(R)-dihydrolipoyl]-L-lysyl-[protein] + NAD(+) = N(6)-[(R)-lipoyl]-L-lysyl-[protein] + NADH + H(+). Its function is as follows. Lipoamide dehydrogenase is a component of the plastidial pyruvate dehydrogenase complex (PDC). The protein is Dihydrolipoyl dehydrogenase 2, chloroplastic (LPD2) of Arabidopsis thaliana (Mouse-ear cress).